A 122-amino-acid chain; its full sequence is MVQQYTRLNVADNTGAKKIMCINVLGGSRKLQAKVGDVIVAAVKKSSPDAQAKSGTVVKAVVVRITKPYARPDGSYIKFDDNAAVILNDKMEPKGTRIFGPVARELRDKKFTKILSLAPEVL.

The protein belongs to the universal ribosomal protein uL14 family. In terms of assembly, part of the 50S ribosomal subunit. Forms a cluster with proteins L3 and L19. In the 70S ribosome, L14 and L19 interact and together make contacts with the 16S rRNA in bridges B5 and B8.

Binds to 23S rRNA. Forms part of two intersubunit bridges in the 70S ribosome. In Dehalococcoides mccartyi (strain ATCC BAA-2266 / KCTC 15142 / 195) (Dehalococcoides ethenogenes (strain 195)), this protein is Large ribosomal subunit protein uL14.